A 317-amino-acid chain; its full sequence is Acetyl-coenzyme A carboxylase carboxyl transferase subunit alpha (317 aa).

One can recognise a CoA carboxyltransferase C-terminal domain in the interval 40–293 (LEVRVREAIL…GDVIANALAE (254 aa)).

The protein belongs to the AccA family. Acetyl-CoA carboxylase is a heterohexamer composed of biotin carboxyl carrier protein (AccB), biotin carboxylase (AccC) and two subunits each of ACCase subunit alpha (AccA) and ACCase subunit beta (AccD).

It localises to the cytoplasm. The catalysed reaction is N(6)-carboxybiotinyl-L-lysyl-[protein] + acetyl-CoA = N(6)-biotinyl-L-lysyl-[protein] + malonyl-CoA. It functions in the pathway lipid metabolism; malonyl-CoA biosynthesis; malonyl-CoA from acetyl-CoA: step 1/1. Functionally, component of the acetyl coenzyme A carboxylase (ACC) complex. First, biotin carboxylase catalyzes the carboxylation of biotin on its carrier protein (BCCP) and then the CO(2) group is transferred by the carboxyltransferase to acetyl-CoA to form malonyl-CoA. In Rhizobium etli (strain CIAT 652), this protein is Acetyl-coenzyme A carboxylase carboxyl transferase subunit alpha.